A 179-amino-acid chain; its full sequence is Acireductone dioxygenase (179 aa).

4 residues coordinate Fe(2+): histidine 88, histidine 90, glutamate 94, and histidine 133. Ni(2+)-binding residues include histidine 88, histidine 90, glutamate 94, and histidine 133.

It belongs to the acireductone dioxygenase (ARD) family. In terms of assembly, monomer. Interacts with MMP14. Fe(2+) serves as cofactor. Requires Ni(2+) as cofactor.

It localises to the cytoplasm. Its subcellular location is the nucleus. It is found in the cell membrane. The catalysed reaction is 1,2-dihydroxy-5-(methylsulfanyl)pent-1-en-3-one + O2 = 4-methylsulfanyl-2-oxobutanoate + formate + 2 H(+). It catalyses the reaction 1,2-dihydroxy-5-(methylsulfanyl)pent-1-en-3-one + O2 = 3-(methylsulfanyl)propanoate + CO + formate + 2 H(+). Its pathway is amino-acid biosynthesis; L-methionine biosynthesis via salvage pathway; L-methionine from S-methyl-5-thio-alpha-D-ribose 1-phosphate: step 5/6. Functionally, catalyzes 2 different reactions between oxygen and the acireductone 1,2-dihydroxy-3-keto-5-methylthiopentene (DHK-MTPene) depending upon the metal bound in the active site. Fe-containing acireductone dioxygenase (Fe-ARD) produces formate and 2-keto-4-methylthiobutyrate (KMTB), the alpha-ketoacid precursor of methionine in the methionine recycle pathway. Ni-containing acireductone dioxygenase (Ni-ARD) produces methylthiopropionate, carbon monoxide and formate, and does not lie on the methionine recycle pathway. Also down-regulates cell migration mediated by MMP14. The protein is Acireductone dioxygenase of Macaca mulatta (Rhesus macaque).